A 491-amino-acid polypeptide reads, in one-letter code: Cytochrome P450 81F2 (491 aa).

The chain crosses the membrane as a helical span at residues 283–303 (VIIKGLMLSMMLAGTDTAAVT). Cysteine 429 serves as a coordination point for heme.

This sequence belongs to the cytochrome P450 family. Requires heme as cofactor.

The protein localises to the membrane. The protein operates within secondary metabolite biosynthesis. In terms of biological role, involved in indole glucosinolate biosynthesis. Catalyzes hydroxylation reactions of the glucosinolate indole ring. Converts indol-3-yl-methylglucosinolate (I3M) to 4-hydroxy-indol-3-yl-methylglucosinolate (4OH-I3M) and/or 1-hydroxy-indol-3-yl-methylglucosinolate (1OH-I3M) intermediates. These hydroxy intermediates are converted to 4-methoxy-indol-3-yl-methylglucosinolate (4MO-I3M) and 1-methoxy-indol-3-yl-methylglucosinolate (1MO-I3M) by indole glucosinolate methyltransferase 1 and 2 (IGMT1 and IGMT2). Contributes to defense against the green peach aphid (Myzus persicae), a generalist phloem-feeding herbivore. Required for the biosynthesis of antifungal indole glucosinolate metabolites. Required for the pathogen-induced accumulation of 4MO-I3M, which in turn is activated by the atypical BGLU26/PEN2 myrosinase. Required for the biosynthesis of Trp-derived antifungal compounds and non-host resistance to the necrotrophic fungal pathogen Plectosphaerella cucumerina. Required for resistance to the non-adapted fungal pathogen Colletotrichum gloeosporioides. The sequence is that of Cytochrome P450 81F2 from Arabidopsis thaliana (Mouse-ear cress).